A 388-amino-acid polypeptide reads, in one-letter code: Chorismate synthase (388 aa).

NADP(+)-binding residues include arginine 39 and arginine 45. FMN is bound by residues 130-132 (RSS), 251-252 (NA), glycine 296, 311-315 (KPIPT), and arginine 337.

It belongs to the chorismate synthase family. In terms of assembly, homotetramer. It depends on FMNH2 as a cofactor.

It carries out the reaction 5-O-(1-carboxyvinyl)-3-phosphoshikimate = chorismate + phosphate. It functions in the pathway metabolic intermediate biosynthesis; chorismate biosynthesis; chorismate from D-erythrose 4-phosphate and phosphoenolpyruvate: step 7/7. Its function is as follows. Catalyzes the anti-1,4-elimination of the C-3 phosphate and the C-6 proR hydrogen from 5-enolpyruvylshikimate-3-phosphate (EPSP) to yield chorismate, which is the branch point compound that serves as the starting substrate for the three terminal pathways of aromatic amino acid biosynthesis. This reaction introduces a second double bond into the aromatic ring system. The chain is Chorismate synthase from Streptococcus pneumoniae (strain ATCC 700669 / Spain 23F-1).